Reading from the N-terminus, the 360-residue chain is Uroporphyrinogen decarboxylase (360 aa).

Substrate-binding positions include 27–31, F46, D77, Y154, T209, and H327; that span reads RQSGR.

It belongs to the uroporphyrinogen decarboxylase family. Homodimer.

It localises to the cytoplasm. The enzyme catalyses uroporphyrinogen III + 4 H(+) = coproporphyrinogen III + 4 CO2. It participates in porphyrin-containing compound metabolism; protoporphyrin-IX biosynthesis; coproporphyrinogen-III from 5-aminolevulinate: step 4/4. In terms of biological role, catalyzes the decarboxylation of four acetate groups of uroporphyrinogen-III to yield coproporphyrinogen-III. This Wigglesworthia glossinidia brevipalpis protein is Uroporphyrinogen decarboxylase.